We begin with the raw amino-acid sequence, 191 residues long: Protein Ves (191 aa).

The protein belongs to the Ves family.

This Escherichia coli O7:K1 (strain IAI39 / ExPEC) protein is Protein Ves.